The following is a 295-amino-acid chain: Perivine-Nbeta-methyltransferase (295 aa).

The interval 76 to 85 (ILDVGCGKGG) is SAM motif I. Positions 138-144 (DGSFELI) match the Vacuolar targeting signal motif. The interval 139-147 (GSFELIFVI) is SAM motif II. The interval 166–175 (VAAPGAQIVI) is SAM motif III.

This sequence belongs to the class I-like SAM-binding methyltransferase superfamily. gTMT family. As to quaternary structure, homodimer. In terms of tissue distribution, mainly expressed in young leaves, and, to a lower extent, in mature leaves, flowers, stems and roots (at protein level). Transcripts levels are highest in flowers, moderate in leaves and low in roots and stems.

The protein resides in the vacuole membrane. It carries out the reaction perivine + S-adenosyl-L-methionine = vobasine + S-adenosyl-L-homocysteine + 2 H(+). It functions in the pathway alkaloid biosynthesis; vindoline biosynthesis. In terms of biological role, S-adenosyl-L-methionine-dependent N-methyltransferase involved in the biosynthesis of biologically active monoterpenoid indole alkaloids (MIAs) natural products including vindoline. Catalyzes the conversion of perivine to Nbeta-methylperivine (vobasine) by methylating its N4 nitrogen. Inactive with picrinine as substrate. The sequence is that of Perivine-Nbeta-methyltransferase from Catharanthus roseus (Madagascar periwinkle).